We begin with the raw amino-acid sequence, 160 residues long: S-ribosylhomocysteine lyase (160 aa).

Residues His-57, His-61, and Cys-127 each coordinate Fe cation.

Belongs to the LuxS family. Homodimer. It depends on Fe cation as a cofactor.

It carries out the reaction S-(5-deoxy-D-ribos-5-yl)-L-homocysteine = (S)-4,5-dihydroxypentane-2,3-dione + L-homocysteine. Its function is as follows. Involved in the synthesis of autoinducer 2 (AI-2) which is secreted by bacteria and is used to communicate both the cell density and the metabolic potential of the environment. The regulation of gene expression in response to changes in cell density is called quorum sensing. Catalyzes the transformation of S-ribosylhomocysteine (RHC) to homocysteine (HC) and 4,5-dihydroxy-2,3-pentadione (DPD). The protein is S-ribosylhomocysteine lyase of Streptococcus pyogenes serotype M4 (strain MGAS10750).